Here is a 106-residue protein sequence, read N- to C-terminus: ATP-dependent Clp protease adapter protein ClpS (106 aa).

This sequence belongs to the ClpS family. As to quaternary structure, binds to the N-terminal domain of the chaperone ClpA.

Involved in the modulation of the specificity of the ClpAP-mediated ATP-dependent protein degradation. In Cronobacter sakazakii (strain ATCC BAA-894) (Enterobacter sakazakii), this protein is ATP-dependent Clp protease adapter protein ClpS.